Here is a 150-residue protein sequence, read N- to C-terminus: MANATSGVAVSEECKARFQELRAGRAHRFVVFKIDDAMRQVVVDRVGPRDAGFDELTASLPADGCRYAVYDHDFTVSDATATAAAGEGGEAPRSKIFFVSWSPAAADVRSKMVYASSNEGFKKELDGVQIDLQATDPSELTLDVLKDHTS.

The region spanning 7-150 (GVAVSEECKA…TLDVLKDHTS (144 aa)) is the ADF-H domain.

The protein belongs to the actin-binding proteins ADF family.

In terms of biological role, actin-depolymerizing protein. Severs actin filaments (F-actin) and binds to actin monomers. This chain is Actin-depolymerizing factor 3 (ADF3), found in Oryza sativa subsp. japonica (Rice).